The sequence spans 250 residues: V-type proton ATPase subunit D (250 aa).

The protein belongs to the V-ATPase D subunit family. In terms of assembly, V-ATPase is a heteromultimeric enzyme made up of two complexes: the ATP-hydrolytic V1 complex and the proton translocation V0 complex. The V1 complex consists of three catalytic AB heterodimers that form a heterohexamer, three peripheral stalks each consisting of EG heterodimers, one central rotor including subunits D and F, and the regulatory subunits C and H. The proton translocation complex V0 consists of the proton transport subunit a, a ring of proteolipid subunits c9c'', rotary subunit d, subunits e and f, and two accessory subunits ATP6AP1/Ac45 and ATP6AP2/PRR.

Its function is as follows. Subunit of the V1 complex of vacuolar(H+)-ATPase (V-ATPase), a multisubunit enzyme composed of a peripheral complex (V1) that hydrolyzes ATP and a membrane integral complex (V0) that translocates protons. V-ATPase is responsible for acidifying and maintaining the pH of intracellular compartments and in some cell types, is targeted to the plasma membrane, where it is responsible for acidifying the extracellular environment. This is V-type proton ATPase subunit D (VATPD) from Suberites domuncula (Sponge).